A 487-amino-acid polypeptide reads, in one-letter code: Glycogen synthase (487 aa).

Position 19 (Lys19) interacts with ADP-alpha-D-glucose.

Belongs to the glycosyltransferase 1 family. Bacterial/plant glycogen synthase subfamily.

The enzyme catalyses [(1-&gt;4)-alpha-D-glucosyl](n) + ADP-alpha-D-glucose = [(1-&gt;4)-alpha-D-glucosyl](n+1) + ADP + H(+). It participates in glycan biosynthesis; glycogen biosynthesis. Functionally, synthesizes alpha-1,4-glucan chains using ADP-glucose. The chain is Glycogen synthase from Moorella thermoacetica (strain ATCC 39073 / JCM 9320).